Reading from the N-terminus, the 508-residue chain is Bifunctional purine biosynthesis protein PurH (508 aa).

Residues 1–145 (MAKKALISVS…KNYKYVTILV (145 aa)) form the MGS-like domain.

Belongs to the PurH family.

The enzyme catalyses (6R)-10-formyltetrahydrofolate + 5-amino-1-(5-phospho-beta-D-ribosyl)imidazole-4-carboxamide = 5-formamido-1-(5-phospho-D-ribosyl)imidazole-4-carboxamide + (6S)-5,6,7,8-tetrahydrofolate. The catalysed reaction is IMP + H2O = 5-formamido-1-(5-phospho-D-ribosyl)imidazole-4-carboxamide. The protein operates within purine metabolism; IMP biosynthesis via de novo pathway; 5-formamido-1-(5-phospho-D-ribosyl)imidazole-4-carboxamide from 5-amino-1-(5-phospho-D-ribosyl)imidazole-4-carboxamide (10-formyl THF route): step 1/1. Its pathway is purine metabolism; IMP biosynthesis via de novo pathway; IMP from 5-formamido-1-(5-phospho-D-ribosyl)imidazole-4-carboxamide: step 1/1. The chain is Bifunctional purine biosynthesis protein PurH from Thermoanaerobacter sp. (strain X514).